The sequence spans 270 residues: Endochitinase PR4 (270 aa).

A signal peptide spans Met1 to Ala23. One can recognise a Chitin-binding type-1 domain in the interval Gln24–Thr58. Cystine bridges form between Cys26/Cys34, Cys28/Cys40, Cys33/Cys47, Cys51/Cys56, Cys88/Cys137, Cys150/Cys160, and Cys238/Cys270. Glu132 (proton donor) is an active-site residue.

The protein belongs to the glycosyl hydrolase 19 family. Chitinase class I subfamily.

It carries out the reaction Random endo-hydrolysis of N-acetyl-beta-D-glucosaminide (1-&gt;4)-beta-linkages in chitin and chitodextrins.. Functionally, defense against chitin-containing fungal pathogens. This Phaseolus vulgaris (Kidney bean) protein is Endochitinase PR4 (CHI4).